We begin with the raw amino-acid sequence, 99 residues long: Large ribosomal subunit protein bL27 (99 aa).

Residues 1–9 constitute a propeptide that is removed on maturation; the sequence is MLIMNLQLF.

It belongs to the bacterial ribosomal protein bL27 family. The N-terminus is cleaved by ribosomal processing cysteine protease Prp.

This is Large ribosomal subunit protein bL27 from Clostridium beijerinckii (strain ATCC 51743 / NCIMB 8052) (Clostridium acetobutylicum).